Consider the following 572-residue polypeptide: Proline--tRNA ligase (572 aa).

It belongs to the class-II aminoacyl-tRNA synthetase family. ProS type 1 subfamily. Homodimer.

Its subcellular location is the cytoplasm. The enzyme catalyses tRNA(Pro) + L-proline + ATP = L-prolyl-tRNA(Pro) + AMP + diphosphate. Its function is as follows. Catalyzes the attachment of proline to tRNA(Pro) in a two-step reaction: proline is first activated by ATP to form Pro-AMP and then transferred to the acceptor end of tRNA(Pro). As ProRS can inadvertently accommodate and process non-cognate amino acids such as alanine and cysteine, to avoid such errors it has two additional distinct editing activities against alanine. One activity is designated as 'pretransfer' editing and involves the tRNA(Pro)-independent hydrolysis of activated Ala-AMP. The other activity is designated 'posttransfer' editing and involves deacylation of mischarged Ala-tRNA(Pro). The misacylated Cys-tRNA(Pro) is not edited by ProRS. The chain is Proline--tRNA ligase from Erwinia tasmaniensis (strain DSM 17950 / CFBP 7177 / CIP 109463 / NCPPB 4357 / Et1/99).